A 701-amino-acid chain; its full sequence is Elongation factor G (701 aa).

The 284-residue stretch at S8–V291 folds into the tr-type G domain. Residues A17 to T24, D89 to H93, and N143 to D146 each bind GTP.

Belongs to the TRAFAC class translation factor GTPase superfamily. Classic translation factor GTPase family. EF-G/EF-2 subfamily.

The protein localises to the cytoplasm. Catalyzes the GTP-dependent ribosomal translocation step during translation elongation. During this step, the ribosome changes from the pre-translocational (PRE) to the post-translocational (POST) state as the newly formed A-site-bound peptidyl-tRNA and P-site-bound deacylated tRNA move to the P and E sites, respectively. Catalyzes the coordinated movement of the two tRNA molecules, the mRNA and conformational changes in the ribosome. The chain is Elongation factor G from Pseudomonas fluorescens (strain SBW25).